A 261-amino-acid chain; its full sequence is Eukaryotic translation initiation factor 3 subunit J-A (261 aa).

Positions 1-11 (MAAAAAAAAAA) are enriched in low complexity. Residues 1–113 (MAAAAAAAAA…EPEESKVLTP (113 aa)) are disordered. Residues 4–72 (AAAAAAAAGD…KEEAEVKPEV (69 aa)) form a sufficient for interaction with EIF3B region. Ser-14, Ser-16, and Ser-23 each carry phosphoserine. Residues 43–64 (EGEDEDEDVKDNWDDDDDENKE) show a composition bias toward acidic residues. Positions 65 to 109 (EAEVKPEVKISEKKKIAEKIKEKERQQKKRQEEIKKRLEEPEESK) are enriched in basic and acidic residues. Residues 73–138 (KISEKKKIAE…ESDLELAKET (66 aa)) are a coiled coil. Residue Lys-109 forms a Glycyl lysine isopeptide (Lys-Gly) (interchain with G-Cter in SUMO2) linkage. Residue Thr-112 is modified to Phosphothreonine. Ser-130 carries the phosphoserine modification. Positions 246 to 261 (YGGYEGGYVQDYEDFM) are promotes stable association with the 40S ribosome. Tyr-257 carries the phosphotyrosine modification.

This sequence belongs to the eIF-3 subunit J family. In terms of assembly, component of the eukaryotic translation initiation factor 3 (eIF-3) complex, which is composed of 13 subunits: EIF3A, EIF3B, EIF3C, EIF3D, EIF3E, EIF3F, EIF3G, EIF3H, EIF3I, EIF3J, EIF3K, EIF3L and EIF3M. The eIF-3 complex appears to include 3 stable modules: module A is composed of EIF3A, EIF3B, EIF3G and EIF3I; module B is composed of EIF3F, EIF3H, and EIF3M; and module C is composed of EIF3C, EIF3D, EIF3E, EIF3K and EIF3L. EIF3C of module C binds EIF3B of module A and EIF3H of module B, thereby linking the three modules. EIF3J is a labile subunit that binds to the eIF-3 complex via EIF3B. The eIF-3 complex interacts with RPS6KB1 under conditions of nutrient depletion. Mitogenic stimulation leads to binding and activation of a complex composed of MTOR and RPTOR, leading to phosphorylation and release of RPS6KB1 and binding of EIF4B to eIF-3. Post-translationally, phosphorylated. Phosphorylation is enhanced upon serum stimulation.

The protein resides in the cytoplasm. In terms of biological role, component of the eukaryotic translation initiation factor 3 (eIF-3) complex, which is required for several steps in the initiation of protein synthesis. The eIF-3 complex associates with the 40S ribosome and facilitates the recruitment of eIF-1, eIF-1A, eIF-2:GTP:methionyl-tRNAi and eIF-5 to form the 43S pre-initiation complex (43S PIC). The eIF-3 complex stimulates mRNA recruitment to the 43S PIC and scanning of the mRNA for AUG recognition. The eIF-3 complex is also required for disassembly and recycling of post-termination ribosomal complexes and subsequently prevents premature joining of the 40S and 60S ribosomal subunits prior to initiation. The eIF-3 complex specifically targets and initiates translation of a subset of mRNAs involved in cell proliferation, including cell cycling, differentiation and apoptosis, and uses different modes of RNA stem-loop binding to exert either translational activation or repression. This subunit binds directly within the mRNA entry channel of the 40S ribosome to the aminoacyl (A) site. It may regulate the interaction between the 43S PIC and mRNA. The polypeptide is Eukaryotic translation initiation factor 3 subunit J-A (Eif3j1) (Mus musculus (Mouse)).